The sequence spans 482 residues: Catalase (482 aa).

A compositionally biased stretch (polar residues) spans 1-23 (MSQNKTLTTASGPPVADNQNSRS). The segment at 1–28 (MSQNKTLTTASGPPVADNQNSRSAGPRG) is disordered. Residues His55 and Asn128 contribute to the active site. Residue Tyr338 coordinates heme. Positions 370-395 (SMAFGSNGGAAPNYEPNSYADAPKQA) are disordered.

The protein belongs to the catalase family. Heme serves as cofactor.

It carries out the reaction 2 H2O2 = O2 + 2 H2O. Decomposes hydrogen peroxide into water and oxygen; serves to protect cells from the toxic effects of hydrogen peroxide. The polypeptide is Catalase (cat) (Onchocerca volvulus endobacterium).